Here is a 246-residue protein sequence, read N- to C-terminus: Bromelain inhibitor (246 aa).

Positions 1–19 (MNMLLLFLHEVINGERVTL) are cleaved as a signal peptide. Cystine bridges form between C22/C42, C25/C74, C27/C40, C49/C56, and C53/C65. The propeptide occupies 31-35 (TSSSD). 2 consecutive propeptides follow at residues 77 to 95 (PVSSSEAKQKMIKGERVTL) and 107 to 111 (TSSSD). Cystine bridges form between C98–C118, C101–C150, C103–C116, C125–C132, and C129–C141. 2 consecutive propeptides follow at residues 153 to 171 (PVSSLEAKQNMIKEERVTL) and 183 to 187 (TSSSD). Cystine bridges form between C174-C194, C177-C226, C179-C192, C201-C208, and C205-C217. Positions 229 to 246 (PVSSWEARQKIKLLQGRE) are excised as a propeptide.

It belongs to the protease inhibitor I67 family. As to quaternary structure, each inhibitor is composed of two chains, designated A and B linked by three disulfide bonds.

Functionally, weak inhibitor of cysteine proteinases. The polypeptide is Bromelain inhibitor (Ananas comosus (Pineapple)).